Here is a 955-residue protein sequence, read N- to C-terminus: 2-oxoglutarate dehydrogenase E1 component (955 aa).

The protein belongs to the alpha-ketoglutarate dehydrogenase family. As to quaternary structure, homodimer. Part of the 2-oxoglutarate dehydrogenase (OGDH) complex composed of E1 (2-oxoglutarate dehydrogenase), E2 (dihydrolipoamide succinyltransferase) and E3 (dihydrolipoamide dehydrogenase); the complex contains multiple copies of the three enzymatic components (E1, E2 and E3). It depends on thiamine diphosphate as a cofactor.

It carries out the reaction N(6)-[(R)-lipoyl]-L-lysyl-[protein] + 2-oxoglutarate + H(+) = N(6)-[(R)-S(8)-succinyldihydrolipoyl]-L-lysyl-[protein] + CO2. Functionally, E1 component of the 2-oxoglutarate dehydrogenase (OGDH) complex which catalyzes the decarboxylation of 2-oxoglutarate, the first step in the conversion of 2-oxoglutarate to succinyl-CoA and CO(2). In Bacillus mycoides (strain KBAB4) (Bacillus weihenstephanensis), this protein is 2-oxoglutarate dehydrogenase E1 component.